The primary structure comprises 160 residues: Putative transcriptional regulator protein YobU (160 aa).

The polypeptide is Putative transcriptional regulator protein YobU (yobU) (Bacillus subtilis (strain 168)).